The primary structure comprises 820 residues: Inhibitor of nuclear factor kappa-B kinase epsilon subunit homolog 1 (820 aa).

A Protein kinase domain is found at 21 to 299; the sequence is LFNDESIGKG…TDIFEFQPVT (279 aa). Residues 27-35 and lysine 49 contribute to the ATP site; that span reads IGKGAYSEV. Aspartate 149 serves as the catalytic Proton acceptor. Residues 758 to 798 form a disordered region; sequence SPNKEQFPKPEQDSILESSIDEGSTSFESTPPSSPPDVGSN.

The protein belongs to the protein kinase superfamily. Ser/Thr protein kinase family. As to quaternary structure, interacts with allo-1 (via N-terminus); the interaction is direct. As to expression, expressed in oocytes.

The protein localises to the cytoplasm. It carries out the reaction L-seryl-[protein] + ATP = O-phospho-L-seryl-[protein] + ADP + H(+). The catalysed reaction is L-threonyl-[protein] + ATP = O-phospho-L-threonyl-[protein] + ADP + H(+). Its function is as follows. Serine/threonine-protein kinase, which plays a role in regulating allophagy, an autophagic process in which paternal organelles, including mitochondria and membranous organelles, are degraded in embryos. Phosphorylates the allophagy receptor allo-1, which is required for allophagy. This chain is Inhibitor of nuclear factor kappa-B kinase epsilon subunit homolog 1, found in Caenorhabditis elegans.